We begin with the raw amino-acid sequence, 119 residues long: Large ribosomal subunit protein uL18 (119 aa).

It belongs to the universal ribosomal protein uL18 family. Part of the 50S ribosomal subunit; part of the 5S rRNA/L5/L18/L25 subcomplex. Contacts the 5S and 23S rRNAs.

In terms of biological role, this is one of the proteins that bind and probably mediate the attachment of the 5S RNA into the large ribosomal subunit, where it forms part of the central protuberance. This is Large ribosomal subunit protein uL18 from Solibacter usitatus (strain Ellin6076).